The sequence spans 78 residues: Toxin BmTxKS4 (78 aa).

An N-terminal signal peptide occupies residues 1–21 (MKLKISFLILVLFSVFFAIEG). Residues 22–32 (IIKWFPASVNG) constitute a propeptide that is removed on maturation.

Contains 3 disulfide bonds. As to expression, expressed by the venom gland.

Its subcellular location is the secreted. Functionally, reversibly inhibits potassium channels. This is Toxin BmTxKS4 from Olivierus martensii (Manchurian scorpion).